A 160-amino-acid polypeptide reads, in one-letter code: MAPK regulated corepressor interacting protein 2 (160 aa).

Met1 is subject to N-acetylmethionine. The segment at 1 to 64 is disordered; the sequence is MYTITKGPSK…GPWPLSSPGP (64 aa). Arg35 carries the omega-N-methylarginine modification. Positions 37–61 are enriched in pro residues; it reads PAPPTSQPPRAQPFAQPPGPWPLSS. The residue at position 61 (Ser61) is a Phosphoserine. At Arg65 the chain carries Omega-N-methylarginine. Ser82 is modified (phosphoserine).

This sequence belongs to the MCRIP family. Interacts with DDX6. Interacts with MCRIP1.

It localises to the cytoplasm. The protein localises to the stress granule. The protein resides in the nucleus. The protein is MAPK regulated corepressor interacting protein 2 (MCRIP2) of Homo sapiens (Human).